A 290-amino-acid chain; its full sequence is Porphobilinogen deaminase (290 aa).

Cys237 carries the S-(dipyrrolylmethanemethyl)cysteine modification.

The protein belongs to the HMBS family. In terms of assembly, monomer. It depends on dipyrromethane as a cofactor.

The catalysed reaction is 4 porphobilinogen + H2O = hydroxymethylbilane + 4 NH4(+). It functions in the pathway porphyrin-containing compound metabolism; protoporphyrin-IX biosynthesis; coproporphyrinogen-III from 5-aminolevulinate: step 2/4. Functionally, tetrapolymerization of the monopyrrole PBG into the hydroxymethylbilane pre-uroporphyrinogen in several discrete steps. This chain is Porphobilinogen deaminase, found in Clostridium kluyveri (strain NBRC 12016).